The chain runs to 325 residues: Beta-ketoacyl-[acyl-carrier-protein] synthase III (325 aa).

Residues Cys112 and His250 contribute to the active site. Positions 251–255 (QANSR) are ACP-binding. The active site involves Asn280.

This sequence belongs to the thiolase-like superfamily. FabH family. Homodimer.

The protein localises to the cytoplasm. It catalyses the reaction malonyl-[ACP] + acetyl-CoA + H(+) = 3-oxobutanoyl-[ACP] + CO2 + CoA. It functions in the pathway lipid metabolism; fatty acid biosynthesis. Catalyzes the condensation reaction of fatty acid synthesis by the addition to an acyl acceptor of two carbons from malonyl-ACP. Catalyzes the first condensation reaction which initiates fatty acid synthesis and may therefore play a role in governing the total rate of fatty acid production. Possesses both acetoacetyl-ACP synthase and acetyl transacylase activities. Its substrate specificity determines the biosynthesis of branched-chain and/or straight-chain of fatty acids. The polypeptide is Beta-ketoacyl-[acyl-carrier-protein] synthase III (Lactococcus lactis subsp. lactis (strain IL1403) (Streptococcus lactis)).